Reading from the N-terminus, the 137-residue chain is Putative pre-16S rRNA nuclease (137 aa).

It belongs to the YqgF nuclease family.

It localises to the cytoplasm. Its function is as follows. Could be a nuclease involved in processing of the 5'-end of pre-16S rRNA. This chain is Putative pre-16S rRNA nuclease, found in Anaeromyxobacter sp. (strain K).